Consider the following 213-residue polypeptide: Adenylate kinase (213 aa).

10 to 15 (GSGKGT) serves as a coordination point for ATP. Positions 30 to 59 (STGDMLRTTVNKESVLGKNIQAIIKLGNLV) are NMP. AMP is bound by residues threonine 31, arginine 36, 57–59 (NLV), 85–88 (GFPR), and glutamine 92. The tract at residues 122 to 159 (GRMVHEPSGRIYHVTFNPPKQKGKDDITGENLIIRQDD) is LID. ATP contacts are provided by residues arginine 123 and 132-133 (IY). Arginine 156 and arginine 167 together coordinate AMP. ATP is bound at residue cysteine 199.

The protein belongs to the adenylate kinase family. As to quaternary structure, monomer.

The protein localises to the cytoplasm. The catalysed reaction is AMP + ATP = 2 ADP. The protein operates within purine metabolism; AMP biosynthesis via salvage pathway; AMP from ADP: step 1/1. Its function is as follows. Catalyzes the reversible transfer of the terminal phosphate group between ATP and AMP. Plays an important role in cellular energy homeostasis and in adenine nucleotide metabolism. This chain is Adenylate kinase, found in Baumannia cicadellinicola subsp. Homalodisca coagulata.